Consider the following 384-residue polypeptide: Probable fructokinase-6, chloroplastic (384 aa).

The N-terminal 46 residues, 1–46 (MALQATTTTFCFSGPTFRSTPHSLTSKRPISIKATTSSPSRLSNSR), are a transit peptide targeting the chloroplast. Residues 34–61 (ATTSSPSRLSNSRSNLKGRALSSDGSTQ) are disordered. Residues 35–48 (TTSSPSRLSNSRSN) are compositionally biased toward low complexity.

The protein belongs to the carbohydrate kinase PfkB family.

The protein resides in the plastid. It localises to the chloroplast. It carries out the reaction D-fructose + ATP = D-fructose 6-phosphate + ADP + H(+). It functions in the pathway glycan biosynthesis; starch biosynthesis. Functionally, may play an important role in maintaining the flux of carbon towards starch formation. The protein is Probable fructokinase-6, chloroplastic of Arabidopsis thaliana (Mouse-ear cress).